Reading from the N-terminus, the 236-residue chain is Phosphoribosylaminoimidazole-succinocarboxamide synthase (236 aa).

Belongs to the SAICAR synthetase family.

The catalysed reaction is 5-amino-1-(5-phospho-D-ribosyl)imidazole-4-carboxylate + L-aspartate + ATP = (2S)-2-[5-amino-1-(5-phospho-beta-D-ribosyl)imidazole-4-carboxamido]succinate + ADP + phosphate + 2 H(+). It participates in purine metabolism; IMP biosynthesis via de novo pathway; 5-amino-1-(5-phospho-D-ribosyl)imidazole-4-carboxamide from 5-amino-1-(5-phospho-D-ribosyl)imidazole-4-carboxylate: step 1/2. The protein is Phosphoribosylaminoimidazole-succinocarboxamide synthase of Campylobacter jejuni subsp. doylei (strain ATCC BAA-1458 / RM4099 / 269.97).